The primary structure comprises 308 residues: Porphobilinogen deaminase (308 aa).

C240 bears the S-(dipyrrolylmethanemethyl)cysteine mark.

Belongs to the HMBS family. In terms of assembly, monomer. Requires dipyrromethane as cofactor.

It carries out the reaction 4 porphobilinogen + H2O = hydroxymethylbilane + 4 NH4(+). It participates in porphyrin-containing compound metabolism; protoporphyrin-IX biosynthesis; coproporphyrinogen-III from 5-aminolevulinate: step 2/4. Tetrapolymerization of the monopyrrole PBG into the hydroxymethylbilane pre-uroporphyrinogen in several discrete steps. This chain is Porphobilinogen deaminase, found in Campylobacter lari (strain RM2100 / D67 / ATCC BAA-1060).